Consider the following 595-residue polypeptide: Coagulation factor XII (595 aa).

The signal sequence occupies residues 1 to 19; that stretch reads MTALLFLGSLLMSLDLTLS. A Fibronectin type-II domain is found at 41–89; that stretch reads VDGKLCHFPFQYHRRLYHKCIHKGQPGSRPWCATTPNFDEDQQWGYCLE. 13 cysteine pairs are disulfide-bonded: Cys-46–Cys-72, Cys-60–Cys-87, Cys-97–Cys-109, Cys-103–Cys-118, Cys-120–Cys-129, Cys-134–Cys-162, Cys-160–Cys-169, Cys-177–Cys-188, Cys-182–Cys-197, Cys-199–Cys-208, Cys-216–Cys-294, Cys-237–Cys-276, and Cys-265–Cys-289. In terms of domain architecture, EGF-like 1 spans 93 to 130; that stretch reads VKDHCSKHSPCHKGGTCVNTPNGPHCLCPEHLTGKHCQ. The O-linked (Fuc) threonine glycan is linked to Thr-108. Positions 132–172 constitute a Fibronectin type-I domain; sequence EKCFESQLLKFFHENEIWFRTGPGGVARCQCKGPQAVCKLL. The EGF-like 2 domain maps to 173 to 209; the sequence is TSQVCRVNPCLNGGTCLLVEDHRLCHCPAGYAGPFCD. The 80-residue stretch at 215–294 folds into the Kringle domain; sequence TCYEDRGLSY…SWDYCDLEQC (80 aa). N-linked (GlcNAc...) asparagine glycosylation occurs at Asn-248. Thr-298 carries O-linked (GalNAc...) threonine glycosylation. Positions 302 to 332 are disordered; it reads PVSPESHDMLKPRPPILQSSPRDSTRNQNVV. Residue Ser-307 is glycosylated (O-linked (GalNAc...) serine). Positions 318–332 are enriched in polar residues; sequence LQSSPRDSTRNQNVV. Thr-326 carries O-linked (GalNAc...) threonine glycosylation. 7 disulfide bridges follow: Cys-340-Cys-466, Cys-378-Cys-394, Cys-386-Cys-455, Cys-417-Cys-420, Cys-480-Cys-549, Cys-512-Cys-528, and Cys-539-Cys-570. One can recognise a Peptidase S1 domain in the interval 354-594; sequence VVGGLVALPG…YLDWIQEHTA (241 aa). His-393 functions as the Charge relay system in the catalytic mechanism. An N-linked (GlcNAc...) asparagine glycan is attached at Asn-414. Catalysis depends on Asp-442, which acts as the Charge relay system. Ser-543 serves as the catalytic Charge relay system.

The protein belongs to the peptidase S1 family. Interacts with HRG; the interaction, which is enhanced in the presence of zinc ions and inhibited by heparin-binding, inhibits factor XII autoactivation and contact-initiated coagulation. O- and N-glycosylated.

Its subcellular location is the secreted. The catalysed reaction is Selective cleavage of Arg-|-Ile bonds in factor VII to form factor VIIa and factor XI to form factor XIa.. Its activity is regulated as follows. Activity is promoted in the presence of negatively charged surfaces. Functionally, factor XII is a serum glycoprotein that participates in the initiation of blood coagulation, fibrinolysis, and the generation of bradykinin and angiotensin. Prekallikrein is cleaved by factor XII to form kallikrein, which then cleaves factor XII first to alpha-factor XIIa and then trypsin cleaves it to beta-factor XIIa. Alpha-factor XIIa activates factor XI to factor XIa. The sequence is that of Coagulation factor XII (F12) from Rattus norvegicus (Rat).